The chain runs to 318 residues: ATP synthase gamma chain (318 aa).

This sequence belongs to the ATPase gamma chain family. F-type ATPases have 2 components, CF(1) - the catalytic core - and CF(0) - the membrane proton channel. CF(1) has five subunits: alpha(3), beta(3), gamma(1), delta(1), epsilon(1). CF(0) has three main subunits: a, b and c.

Its subcellular location is the cell membrane. Functionally, produces ATP from ADP in the presence of a proton gradient across the membrane. The gamma chain is believed to be important in regulating ATPase activity and the flow of protons through the CF(0) complex. This is ATP synthase gamma chain from Lactobacillus gasseri (strain ATCC 33323 / DSM 20243 / BCRC 14619 / CIP 102991 / JCM 1131 / KCTC 3163 / NCIMB 11718 / NCTC 13722 / AM63).